We begin with the raw amino-acid sequence, 256 residues long: DNA repair protein RecO (256 aa).

It belongs to the RecO family.

Involved in DNA repair and RecF pathway recombination. This chain is DNA repair protein RecO, found in Pelotomaculum thermopropionicum (strain DSM 13744 / JCM 10971 / SI).